Reading from the N-terminus, the 523-residue chain is Putative UDP-glucuronosyltransferase ugt-50 (523 aa).

An N-terminal signal peptide occupies residues 1-25 (MHYSQMRWMFFCLTALLHGSFIVNA). N-linked (GlcNAc...) asparagine glycans are attached at residues N84, N248, N283, and N487. The chain crosses the membrane as a helical span at residues 490–508 (IIEHNHLDLFFYLCIISLL).

This sequence belongs to the UDP-glycosyltransferase family.

The protein localises to the membrane. The enzyme catalyses glucuronate acceptor + UDP-alpha-D-glucuronate = acceptor beta-D-glucuronoside + UDP + H(+). This Caenorhabditis elegans protein is Putative UDP-glucuronosyltransferase ugt-50 (ugt-50).